Consider the following 356-residue polypeptide: tRNA pseudouridine synthase D (356 aa).

Aspartate 84 serves as the catalytic Nucleophile. The 144-residue stretch at 159–302 folds into the TRUD domain; the sequence is GVPNYYGPQR…RRGARRPIRV (144 aa).

Belongs to the pseudouridine synthase TruD family.

The catalysed reaction is uridine(13) in tRNA = pseudouridine(13) in tRNA. In terms of biological role, responsible for synthesis of pseudouridine from uracil-13 in transfer RNAs. This Thermus thermophilus (strain ATCC 27634 / DSM 579 / HB8) protein is tRNA pseudouridine synthase D.